The primary structure comprises 274 residues: 2,3,4,5-tetrahydropyridine-2,6-dicarboxylate N-succinyltransferase (274 aa).

Substrate is bound by residues R104 and D141.

It belongs to the transferase hexapeptide repeat family. Homotrimer.

Its subcellular location is the cytoplasm. It carries out the reaction (S)-2,3,4,5-tetrahydrodipicolinate + succinyl-CoA + H2O = (S)-2-succinylamino-6-oxoheptanedioate + CoA. It participates in amino-acid biosynthesis; L-lysine biosynthesis via DAP pathway; LL-2,6-diaminopimelate from (S)-tetrahydrodipicolinate (succinylase route): step 1/3. Inhibited by p-(chloromercuri)benzenesulfonic acid and cobalt. In Unknown prokaryotic organism, this protein is 2,3,4,5-tetrahydropyridine-2,6-dicarboxylate N-succinyltransferase (dapD).